Here is a 284-residue protein sequence, read N- to C-terminus: 2-dehydro-3-deoxyphosphooctonate aldolase (284 aa).

Belongs to the KdsA family.

It is found in the cytoplasm. The catalysed reaction is D-arabinose 5-phosphate + phosphoenolpyruvate + H2O = 3-deoxy-alpha-D-manno-2-octulosonate-8-phosphate + phosphate. The protein operates within carbohydrate biosynthesis; 3-deoxy-D-manno-octulosonate biosynthesis; 3-deoxy-D-manno-octulosonate from D-ribulose 5-phosphate: step 2/3. It participates in bacterial outer membrane biogenesis; lipopolysaccharide biosynthesis. The chain is 2-dehydro-3-deoxyphosphooctonate aldolase from Actinobacillus succinogenes (strain ATCC 55618 / DSM 22257 / CCUG 43843 / 130Z).